A 490-amino-acid chain; its full sequence is Bifunctional protein HldE (490 aa).

The tract at residues 1 to 330 (MNNFDTLLQS…RKILPHASLA (330 aa)) is ribokinase. 205-208 (NRKE) serves as a coordination point for ATP. The active site involves Asp-275. Residues 358 to 490 (FTNGCFDILH…LVEKAREGTS (133 aa)) are cytidylyltransferase.

It in the N-terminal section; belongs to the carbohydrate kinase PfkB family. In the C-terminal section; belongs to the cytidylyltransferase family. Homodimer.

The enzyme catalyses D-glycero-beta-D-manno-heptose 7-phosphate + ATP = D-glycero-beta-D-manno-heptose 1,7-bisphosphate + ADP + H(+). It catalyses the reaction D-glycero-beta-D-manno-heptose 1-phosphate + ATP + H(+) = ADP-D-glycero-beta-D-manno-heptose + diphosphate. The protein operates within nucleotide-sugar biosynthesis; ADP-L-glycero-beta-D-manno-heptose biosynthesis; ADP-L-glycero-beta-D-manno-heptose from D-glycero-beta-D-manno-heptose 7-phosphate: step 1/4. It participates in nucleotide-sugar biosynthesis; ADP-L-glycero-beta-D-manno-heptose biosynthesis; ADP-L-glycero-beta-D-manno-heptose from D-glycero-beta-D-manno-heptose 7-phosphate: step 3/4. Its function is as follows. Catalyzes the phosphorylation of D-glycero-D-manno-heptose 7-phosphate at the C-1 position to selectively form D-glycero-beta-D-manno-heptose-1,7-bisphosphate. Functionally, catalyzes the ADP transfer from ATP to D-glycero-beta-D-manno-heptose 1-phosphate, yielding ADP-D-glycero-beta-D-manno-heptose. This chain is Bifunctional protein HldE, found in Rhodopseudomonas palustris (strain HaA2).